Reading from the N-terminus, the 177-residue chain is Inner membrane-spanning protein YciB (177 aa).

The next 5 membrane-spanning stretches (helical) occupy residues 22-42 (IFIASGSLIVISGLICIIHWI), 50-70 (ISLFSFLSVFFFGSLTIFFHN), 76-96 (WKITIIYIIFSLVLLISQFFT), 121-141 (FIWSLFFLFCAILNIYIAYYF), and 149-169 (FKVFGFTSLTFFLILITSIYI).

The protein belongs to the YciB family.

It is found in the cell inner membrane. In terms of biological role, plays a role in cell envelope biogenesis, maintenance of cell envelope integrity and membrane homeostasis. This chain is Inner membrane-spanning protein YciB, found in Buchnera aphidicola subsp. Acyrthosiphon pisum (strain 5A).